We begin with the raw amino-acid sequence, 399 residues long: uncharacterized protein (399 aa).

The Cytoplasmic segment spans residues 1–8; it reads MHNLQVRR. The helical transmembrane segment at 9-35 threads the bilayer; sequence HYAALKGFYLFAFLGTGSIIPLLSMYL. Over 36-42 the chain is Extracellular; that stretch reads TKEQHLS. A helical membrane pass occupies residues 43-71; it reads GSQVGLIMSLGPIVMIFFQPFWGMLSDYT. At 72–75 the chain is on the cytoplasmic side; that stretch reads QKTK. The chain crosses the membrane as a helical span at residues 76-101; the sequence is GLLAVCTSITGIIGLAYIAFDSFPLF. Residues 102–105 are Extracellular-facing; it reads ILIA. The helical transmembrane segment at 106 to 123 threads the bilayer; the sequence is ACFAAFQSTIIPLSDSIS. Residues 124–134 lie on the Cytoplasmic side of the membrane; the sequence is LRYTQETNGNY. A helical membrane pass occupies residues 135–157; sequence GGIRLFGSLGFGVAVFAMGQVTN. Topologically, residues 158–160 are extracellular; it reads QLY. Residues 161–180 traverse the membrane as a helical segment; it reads PIHVIFIFGCAFLCIAAILA. Residues 181 to 210 are Cytoplasmic-facing; that stretch reads SQVPGQQKTTKVNIRKGFRELISNKTFLIF. Residues 211–230 traverse the membrane as a helical segment; the sequence is MIITFTTFAPNLANNTYFSL. Topologically, residues 231 to 234 are extracellular; that stretch reads FLDK. A helical transmembrane segment spans residues 235–259; it reads SGASLSAIGILFFIGVISEIPFMRF. Topologically, residues 260 to 269 are cytoplasmic; that stretch reads AQTFIDKMGL. Residues 270-289 traverse the membrane as a helical segment; the sequence is LNVIMLSGGVSLFRWALYFT. At 290–292 the chain is on the extracellular side; that stretch reads APS. A helical transmembrane segment spans residues 293 to 315; sequence LWIIYATVFLQGVAIGLFIPAAL. Over 316–327 the chain is Cytoplasmic; it reads QYVKKITPRHVE. Residues 328-355 form a helical membrane-spanning segment; it reads ATALTMYAAIGNGFGNWFCTFAGGYIFD. Residues 356–358 are Extracellular-facing; that stretch reads YVS. Residues 359 to 379 traverse the membrane as a helical segment; that stretch reads IFAVYLLFGILSIAGFGLTLY. The Cytoplasmic portion of the chain corresponds to 380–399; that stretch reads LMKAEKNKHTLHQPAVTFKP.

The protein belongs to the major facilitator superfamily.

The protein resides in the cell membrane. This is an uncharacterized protein from Bacillus subtilis (strain 168).